Reading from the N-terminus, the 330-residue chain is Phenylalanine--tRNA ligase alpha subunit (330 aa).

Glu255 serves as a coordination point for Mg(2+).

This sequence belongs to the class-II aminoacyl-tRNA synthetase family. Phe-tRNA synthetase alpha subunit type 1 subfamily. As to quaternary structure, tetramer of two alpha and two beta subunits. Mg(2+) serves as cofactor.

Its subcellular location is the cytoplasm. It carries out the reaction tRNA(Phe) + L-phenylalanine + ATP = L-phenylalanyl-tRNA(Phe) + AMP + diphosphate + H(+). This is Phenylalanine--tRNA ligase alpha subunit from Acinetobacter baylyi (strain ATCC 33305 / BD413 / ADP1).